Reading from the N-terminus, the 518-residue chain is MVLNILLAIVGLIVGLGLGFVIAKSRHDKAINGAKISASSILENARKESETLKKEALLEAKEENQKYRSEIESELKESRLELKSQENRLIQREQTLDRKDDSLEKREGSLEEKEEKLGARQQLIDEREKEVENLINQQHQELERIASLSKEEAKSIIMKSTEEELNHELTLMVKESEQRAKEESDRKAKNLLSLAIQRCAADSVSETTVSVVTLPNDEMKGRIIGREGRNIRTLETLTGIDLIIDDTPEAVVLSGFDPIRREIARMTLEKLIQDGRIHPARIEEMVEKSRKEMDERIREYGEQAAFEVGAHTLHPDLIKILGRLRFRTSYGQNVLNHSIEVAKLAGVLAAELGEDVQLAKRAGLLHDIGKALDHEIEGSHVEIGAELAAKYKENSVVINAIASHHGDVEATSVISVLVAAADALSAARPGARSESLENYIRRLENLENISNSFEGVDSSFAVQAGREVRVMVKPEEISDLESVRLVRDIRKKIEDDLDYPGHIKVTVIRETRAVDYAK.

The helical transmembrane segment at 2–22 threads the bilayer; it reads VLNILLAIVGLIVGLGLGFVI. The disordered stretch occupies residues 91–119; that stretch reads QREQTLDRKDDSLEKREGSLEEKEEKLGA. The region spanning 208–268 is the KH domain; the sequence is TVSVVTLPND…IRREIARMTL (61 aa). The HD domain occupies 334–427; the sequence is VLNHSIEVAK…VAAADALSAA (94 aa).

It belongs to the RNase Y family.

The protein localises to the cell membrane. Functionally, endoribonuclease that initiates mRNA decay. This chain is Ribonuclease Y, found in Enterococcus faecalis (strain ATCC 700802 / V583).